Here is a 217-residue protein sequence, read N- to C-terminus: Small ribosomal subunit protein uS3 (217 aa).

Positions 38 to 106 (IRQLIQTKLA…QVHINIVEIK (69 aa)) constitute a KH type-2 domain.

The protein belongs to the universal ribosomal protein uS3 family. Part of the 30S ribosomal subunit. Forms a tight complex with proteins S10 and S14.

Functionally, binds the lower part of the 30S subunit head. Binds mRNA in the 70S ribosome, positioning it for translation. The sequence is that of Small ribosomal subunit protein uS3 from Lactococcus lactis subsp. cremoris (strain MG1363).